Consider the following 40-residue polypeptide: Photosystem II reaction center protein J (40 aa).

The chain crosses the membrane as a helical span at residues 8-28 (IPLWMIGTLAGILVISLIGIF).

It belongs to the PsbJ family. As to quaternary structure, PSII is composed of 1 copy each of membrane proteins PsbA, PsbB, PsbC, PsbD, PsbE, PsbF, PsbH, PsbI, PsbJ, PsbK, PsbL, PsbM, PsbT, PsbX, PsbY, PsbZ, Psb30/Ycf12, at least 3 peripheral proteins of the oxygen-evolving complex and a large number of cofactors. It forms dimeric complexes.

Its subcellular location is the plastid membrane. In terms of biological role, one of the components of the core complex of photosystem II (PSII). PSII is a light-driven water:plastoquinone oxidoreductase that uses light energy to abstract electrons from H(2)O, generating O(2) and a proton gradient subsequently used for ATP formation. It consists of a core antenna complex that captures photons, and an electron transfer chain that converts photonic excitation into a charge separation. This Cuscuta gronovii (Common dodder) protein is Photosystem II reaction center protein J.